A 257-amino-acid chain; its full sequence is Auxin-responsive protein IAA17 (257 aa).

Disordered regions lie at residues 1–51 (MSPP…PAAT) and 85–119 (GKKA…QVVG). Positions 33-37 (LRLGL) match the EAR-like (transcriptional repression) motif. Over residues 105-118 (AAAPQAPAAKAQVV) the composition is skewed to low complexity. The 89-residue stretch at 151-239 (FLYVKVSMDG…SCRRLRIMKG (89 aa)) folds into the PB1 domain.

This sequence belongs to the Aux/IAA family. Homodimers and heterodimers. As to expression, highly expressed in etiolated seedlings and flowers. Expressed in roots and green seedlings.

The protein resides in the nucleus. Its function is as follows. Aux/IAA proteins are short-lived transcriptional factors that function as repressors of early auxin response genes at low auxin concentrations. The protein is Auxin-responsive protein IAA17 (IAA17) of Oryza sativa subsp. japonica (Rice).